A 71-amino-acid polypeptide reads, in one-letter code: Small ribosomal subunit protein bS21 (71 aa).

Over residues 48–60 (KKAAAVKRYKKKL) the composition is skewed to basic residues. The interval 48 to 71 (KKAAAVKRYKKKLQRESIRTTRMY) is disordered. Basic and acidic residues predominate over residues 61–71 (QRESIRTTRMY).

It belongs to the bacterial ribosomal protein bS21 family.

In Psychrobacter sp. (strain PRwf-1), this protein is Small ribosomal subunit protein bS21.